The following is an 85-amino-acid chain: CRISPR-associated endoribonuclease Cas2 (85 aa).

Residue Asp-8 participates in Mg(2+) binding.

It belongs to the CRISPR-associated endoribonuclease Cas2 protein family. As to quaternary structure, homodimer, forms a heterotetramer with a Cas1 homodimer. Requires Mg(2+) as cofactor.

CRISPR (clustered regularly interspaced short palindromic repeat), is an adaptive immune system that provides protection against mobile genetic elements (viruses, transposable elements and conjugative plasmids). CRISPR clusters contain sequences complementary to antecedent mobile elements and target invading nucleic acids. CRISPR clusters are transcribed and processed into CRISPR RNA (crRNA). Functions as a ssRNA-specific endoribonuclease. Involved in the integration of spacer DNA into the CRISPR cassette. The sequence is that of CRISPR-associated endoribonuclease Cas2 from Thermococcus kodakarensis (strain ATCC BAA-918 / JCM 12380 / KOD1) (Pyrococcus kodakaraensis (strain KOD1)).